An 810-amino-acid polypeptide reads, in one-letter code: F-BAR domain only protein 2 (810 aa).

The F-BAR domain occupies 3-250 (MAYFVENFWG…NMANTTVESL (248 aa)). The interval 3–274 (MAYFVENFWG…PGLIEFEECD (272 aa)) is mediates dimerization and binding to membranes enriched in Pi(4,5)-P2 and induces their tubulation. A coiled-coil region spans residues 87–156 (HLDLVRKLQE…CVEQERLKKE (70 aa)). Lys-297 participates in a covalent cross-link: Glycyl lysine isopeptide (Lys-Gly) (interchain with G-Cter in SUMO2). The interval 301–352 (DAESVECPDADSLNIPDVDEEGYSIKPETNQNDTKENHFYSSSDSDSEDEEP) is disordered. Phosphoserine is present on Ser-312. Phosphothreonine is present on Thr-385. Ser-387, Ser-394, and Ser-403 each carry phosphoserine. The disordered stretch occupies residues 404–537 (NEELTKSKPS…VSRGPSPVSL (134 aa)). Positions 433–456 (PSLDSSSSSSLTSSSSARPTTPLS) are enriched in low complexity. A phosphoserine mark is found at Ser-488, Ser-493, Ser-496, Ser-508, Ser-510, Ser-511, and Ser-533. Positions 502–521 (PLARAESSSSISSSASLSAA) are enriched in low complexity. The tract at residues 521 to 810 (ANTPTVGVSR…FATGRYLADC (290 aa)) is mediates interaction with DAB2, EPS15, EPS15R and ITSN1. The MHD domain occupies 542–809 (TLPVAVALTE…RFATGRYLAD (268 aa)).

This sequence belongs to the FCHO family. Homodimer; disulfide-linked. May form homotetramer. Interacts with AP2A1. Interacts with EPS15, EPS15R, ITSN1 and ITSN2; recruit those scaffolding proteins which in turn may interact with the adaptor protein complex AP-2 at the plasma membrane. Interacts with DAB2 (via DPF motifs); mediates LDL receptor/LDLR endocytosis. Ubiquitinated. Mainly undergoes monoubiquitination but also polyubiquitination.

The protein resides in the membrane. Its subcellular location is the clathrin-coated pit. Functions in an early step of clathrin-mediated endocytosis. Has both a membrane binding/bending activity and the ability to recruit proteins essential to the formation of functional clathrin-coated pits. Has a lipid-binding activity with a preference for membranes enriched in phosphatidylserine and phosphoinositides (Pi(4,5) biphosphate) like the plasma membrane. Its membrane-bending activity might be important for the subsequent action of clathrin and adaptors in the formation of clathrin-coated vesicles. Involved in adaptor protein complex AP-2-dependent endocytosis of the transferrin receptor, it also functions in the AP-2-independent endocytosis of the LDL receptor. This is F-BAR domain only protein 2 (FCHO2) from Homo sapiens (Human).